The following is a 185-amino-acid chain: Elongation factor P (185 aa).

It belongs to the elongation factor P family.

It is found in the cytoplasm. It participates in protein biosynthesis; polypeptide chain elongation. Its function is as follows. Involved in peptide bond synthesis. Stimulates efficient translation and peptide-bond synthesis on native or reconstituted 70S ribosomes in vitro. Probably functions indirectly by altering the affinity of the ribosome for aminoacyl-tRNA, thus increasing their reactivity as acceptors for peptidyl transferase. This Streptococcus pyogenes serotype M28 (strain MGAS6180) protein is Elongation factor P.